A 148-amino-acid polypeptide reads, in one-letter code: Snaclec 7 (148 aa).

The first 23 residues, 1–23, serve as a signal peptide directing secretion; it reads MGRFIFVSFGLLVVFLSLSGTGA. Intrachain disulfides connect cysteine 27/cysteine 38, cysteine 55/cysteine 144, and cysteine 121/cysteine 136. One can recognise a C-type lectin domain in the interval 34–145; it reads HERHCYKVIN…CSSTHPFVCK (112 aa).

The protein belongs to the snaclec family. Heterodimer; disulfide-linked. Expressed by the venom gland.

It is found in the secreted. Functionally, interferes with one step of hemostasis (modulation of platelet aggregation, or coagulation cascade, for example). The sequence is that of Snaclec 7 from Echis pyramidum leakeyi (Leakey's carpet viper).